A 215-amino-acid polypeptide reads, in one-letter code: Cytochrome b6 (215 aa).

Residues 32 to 52 (IFYCLGGITLTCFLVQVATGF) traverse the membrane as a helical segment. A heme c-binding site is contributed by Cys35. Heme b is bound by residues His86 and His100. A run of 3 helical transmembrane segments spans residues 90-110 (ASMM…TGGF), 116-136 (LTWV…VTGY), and 186-206 (LHTF…FPMI). Heme b-binding residues include His187 and His202.

Belongs to the cytochrome b family. PetB subfamily. In terms of assembly, the 4 large subunits of the cytochrome b6-f complex are cytochrome b6, subunit IV (17 kDa polypeptide, PetD), cytochrome f and the Rieske protein, while the 4 small subunits are PetG, PetL, PetM and PetN. The complex functions as a dimer. Heme b is required as a cofactor. Requires heme c as cofactor.

It localises to the plastid. The protein resides in the chloroplast thylakoid membrane. Functionally, component of the cytochrome b6-f complex, which mediates electron transfer between photosystem II (PSII) and photosystem I (PSI), cyclic electron flow around PSI, and state transitions. The protein is Cytochrome b6 of Phalaenopsis aphrodite subsp. formosana (Moth orchid).